The chain runs to 158 residues: UPF0098 protein YbhB (158 aa).

It belongs to the UPF0098 family. In terms of assembly, homodimer.

It localises to the cytoplasm. In Escherichia coli (strain K12), this protein is UPF0098 protein YbhB (ybhB).